Consider the following 255-residue polypeptide: Acetyl-coenzyme A carboxylase carboxyl transferase subunit alpha (255 aa).

A CoA carboxyltransferase C-terminal domain is found at 1-235 (MNIAKIVREA…KKELQTELAR (235 aa)).

It belongs to the AccA family. As to quaternary structure, acetyl-CoA carboxylase is a heterohexamer composed of biotin carboxyl carrier protein (AccB), biotin carboxylase (AccC) and two subunits each of ACCase subunit alpha (AccA) and ACCase subunit beta (AccD).

The protein resides in the cytoplasm. The enzyme catalyses N(6)-carboxybiotinyl-L-lysyl-[protein] + acetyl-CoA = N(6)-biotinyl-L-lysyl-[protein] + malonyl-CoA. Its pathway is lipid metabolism; malonyl-CoA biosynthesis; malonyl-CoA from acetyl-CoA: step 1/1. Its function is as follows. Component of the acetyl coenzyme A carboxylase (ACC) complex. First, biotin carboxylase catalyzes the carboxylation of biotin on its carrier protein (BCCP) and then the CO(2) group is transferred by the carboxyltransferase to acetyl-CoA to form malonyl-CoA. In Streptococcus pneumoniae serotype 2 (strain D39 / NCTC 7466), this protein is Acetyl-coenzyme A carboxylase carboxyl transferase subunit alpha.